We begin with the raw amino-acid sequence, 273 residues long: DnaJ homolog subfamily C member 27 (273 aa).

The required for interaction with MAPK1 stretch occupies residues 1–18 (MEASMPKRKEPGKSLRIK). GTP is bound by residues 23-30 (GNAEVGKS), 71-75 (DMAGD), and 134-137 (NKID). The 57-residue stretch at 217 to 273 (DSWDMLGVKPGASRDEVNKAYRKLAVLLHPDKCVAPGSEDAFKAVVNARTALLKNIK) folds into the J domain.

This sequence belongs to the small GTPase superfamily. Rab family. As to quaternary structure, interacts directly with MAPK1 (wild-type and kinase-deficient forms). Interacts directly (in GTP-bound form) with MAP2K1 (wild-type and kinase-deficient forms).

Its subcellular location is the nucleus. In terms of biological role, GTPase which can activate the MEK/ERK pathway and induce cell transformation when overexpressed. May act as a nuclear scaffold for MAPK1, probably by association with MAPK1 nuclear export signal leading to enhanced ERK1/ERK2 signaling. This chain is DnaJ homolog subfamily C member 27 (DNAJC27), found in Bos taurus (Bovine).